Reading from the N-terminus, the 156-residue chain is Ribosomal RNA large subunit methyltransferase H (156 aa).

S-adenosyl-L-methionine-binding positions include Leu73, Gly104, and 123–128; that span reads IGPLTL.

The protein belongs to the RNA methyltransferase RlmH family. In terms of assembly, homodimer.

It localises to the cytoplasm. It catalyses the reaction pseudouridine(1915) in 23S rRNA + S-adenosyl-L-methionine = N(3)-methylpseudouridine(1915) in 23S rRNA + S-adenosyl-L-homocysteine + H(+). Its function is as follows. Specifically methylates the pseudouridine at position 1915 (m3Psi1915) in 23S rRNA. This Stenotrophomonas maltophilia (strain R551-3) protein is Ribosomal RNA large subunit methyltransferase H.